Consider the following 279-residue polypeptide: Putative pyruvate, phosphate dikinase regulatory protein (279 aa).

Position 153-160 (153-160 (GVSRTSKT)) interacts with ADP.

The protein belongs to the pyruvate, phosphate/water dikinase regulatory protein family. PDRP subfamily.

It carries out the reaction N(tele)-phospho-L-histidyl/L-threonyl-[pyruvate, phosphate dikinase] + ADP = N(tele)-phospho-L-histidyl/O-phospho-L-threonyl-[pyruvate, phosphate dikinase] + AMP + H(+). The enzyme catalyses N(tele)-phospho-L-histidyl/O-phospho-L-threonyl-[pyruvate, phosphate dikinase] + phosphate + H(+) = N(tele)-phospho-L-histidyl/L-threonyl-[pyruvate, phosphate dikinase] + diphosphate. Bifunctional serine/threonine kinase and phosphorylase involved in the regulation of the pyruvate, phosphate dikinase (PPDK) by catalyzing its phosphorylation/dephosphorylation. The chain is Putative pyruvate, phosphate dikinase regulatory protein from Bradyrhizobium sp. (strain ORS 278).